The chain runs to 462 residues: MTLTIVVGLGRSGLGAARLLHHQGQKVVVLERGTGPDQTSCAATLQAEGIQVELGIPLEINSFEPWRSDLDAVVVGPGIPWDHPTLNGLRQEGVQIRGEIELAWEALNDIPWVGITGTNGKTTVTHLLSHVLGHAGIVAPMGGNMGVSAADMALKIRRGETPKPDWLVMELSSYQIEAGPNLAPSIGIWTTLTPDHLERHGTLEAYRAIKHSLLQRSSLAIFNGDDADLSAHRPSLKRGMWVKAAPPCHDDPPADFWIDDAGTVQAREGGAMFPAKVLAMPGAHNRQNLLLVTAAAAQIGLNAEQIAQGLESFPGVPHRLENLGSTSSADVFNDSKATNYDAAAVGLQAMAGPVVVLAGGQTKRGNATGWLAELKSKACAVVLFGAGAEELDALIRQSNYQGQVHRCTDLSAAVAIAVRATSELQASSLLLSPACASFDQYQDFEARGDHFRDLMQPHMHVG.

Residue 117-123 participates in ATP binding; it reads GTNGKTT.

Belongs to the MurCDEF family.

Its subcellular location is the cytoplasm. It catalyses the reaction UDP-N-acetyl-alpha-D-muramoyl-L-alanine + D-glutamate + ATP = UDP-N-acetyl-alpha-D-muramoyl-L-alanyl-D-glutamate + ADP + phosphate + H(+). Its pathway is cell wall biogenesis; peptidoglycan biosynthesis. Cell wall formation. Catalyzes the addition of glutamate to the nucleotide precursor UDP-N-acetylmuramoyl-L-alanine (UMA). The sequence is that of UDP-N-acetylmuramoylalanine--D-glutamate ligase from Synechococcus sp. (strain CC9902).